A 449-amino-acid polypeptide reads, in one-letter code: 23S rRNA (uracil(1939)-C(5))-methyltransferase RlmD (449 aa).

The 59-residue stretch at 12–70 (SKQLSAKQSFSVHQLDHLGAGIAQHQGKVVFIPGALPSETVQAQLTEQKKNYARAKLIK) folds into the TRAM domain. 4 residues coordinate [4Fe-4S] cluster: cysteine 83, cysteine 89, cysteine 92, and cysteine 170. Residues glutamine 282, phenylalanine 311, asparagine 316, glutamate 332, aspartate 359, and aspartate 379 each contribute to the S-adenosyl-L-methionine site. Residue cysteine 405 is the Nucleophile of the active site.

This sequence belongs to the class I-like SAM-binding methyltransferase superfamily. RNA M5U methyltransferase family. RlmD subfamily.

It carries out the reaction uridine(1939) in 23S rRNA + S-adenosyl-L-methionine = 5-methyluridine(1939) in 23S rRNA + S-adenosyl-L-homocysteine + H(+). Catalyzes the formation of 5-methyl-uridine at position 1939 (m5U1939) in 23S rRNA. The chain is 23S rRNA (uracil(1939)-C(5))-methyltransferase RlmD from Shewanella sp. (strain MR-7).